Reading from the N-terminus, the 450-residue chain is C4-dicarboxylate transport protein (450 aa).

9 consecutive transmembrane segments (helical) span residues 10 to 30 (SLYF…HFYP), 46 to 66 (LIKM…IAGM), 78 to 98 (YALL…LIVV), 143 to 163 (IVGA…VIFG), 190 to 210 (IINM…AFTI), 224 to 244 (LMIC…GAIA), 291 to 311 (VVGL…SIYL), 332 to 352 (ITLL…TGSG), and 354 to 374 (IVLA…LALI). Positions 428–450 (PEDDLGVAEGPTPGAAVNTTKTV) are disordered.

This sequence belongs to the dicarboxylate/amino acid:cation symporter (DAACS) (TC 2.A.23) family.

The protein localises to the cell inner membrane. Its function is as follows. Responsible for the transport of dicarboxylates such as succinate, fumarate, and malate from the periplasm across the membrane. The protein is C4-dicarboxylate transport protein of Pseudomonas syringae pv. syringae (strain B728a).